Here is a 415-residue protein sequence, read N- to C-terminus: MASISETSDDGSNGGDPNQKPEEPHKNPQEGKEEENQNEKPKEDDHQEEEVENVPQIPPQMPLELIVSTIATLRRCHYPTLSLLSDSFRQVISSVDLFQTRSLIGSTEPVLYTLITFTSPNFEEPRWFILQRRNNTSLQLSLVTSLPPMFPGCTTVTIGHKIYVMGGLRSLNRRAKTVFVIDCRFHTWRYLQEMQVARSYAASAVIDGMIYVVGGSTKRSDDWVEVFNVETNTWENVPSVLSPYGRSKAPFNVHFVLDNKIYILDGNNRVAYDLRGRRWEDWGPAGNQLGYFWQVLYCVVDNLLYAVVPDHLHVTPIVVYDPREMGWRPVMGVDYLPNLVYSESRMTNFGGKLMILGCYQSQARFDYYGEVNVWCVEVALERREDGEIWGKVQSLSLVNKFRKSPVFVLSRTVTV.

The disordered stretch occupies residues 1–58 (MASISETSDDGSNGGDPNQKPEEPHKNPQEGKEEENQNEKPKEDDHQEEEVENVPQIP). The span at 19–45 (QKPEEPHKNPQEGKEEENQNEKPKEDD) shows a compositional bias: basic and acidic residues. One can recognise an F-box domain in the interval 56–103 (QIPPQMPLELIVSTIATLRRCHYPTLSLLSDSFRQVISSVDLFQTRSL). Kelch repeat units follow at residues 161-208 (KIYV…VIDG), 210-254 (IYVV…FNVH), 260-309 (KIYI…AVVP), and 311-355 (HLHV…KLMI).

This is F-box/kelch-repeat protein At2g29600 from Arabidopsis thaliana (Mouse-ear cress).